Here is a 250-residue protein sequence, read N- to C-terminus: Flavin-dependent thymidylate synthase (250 aa).

The region spanning L7 to T233 is the ThyX domain. Residues S71, R95–R97, and Q103 contribute to the FAD site. DUMP is bound by residues E92–R95, Q103–R107, and R172. Residues R95 to S105 carry the ThyX motif motif. Residues N188 to R190 and H194 each bind FAD. Residue R199 coordinates dUMP. The active-site Involved in ionization of N3 of dUMP, leading to its activation is R199.

Belongs to the thymidylate synthase ThyX family. In terms of assembly, homotetramer. FAD serves as cofactor.

It catalyses the reaction dUMP + (6R)-5,10-methylene-5,6,7,8-tetrahydrofolate + NADPH + H(+) = dTMP + (6S)-5,6,7,8-tetrahydrofolate + NADP(+). Its pathway is pyrimidine metabolism; dTTP biosynthesis. In terms of biological role, catalyzes the reductive methylation of 2'-deoxyuridine-5'-monophosphate (dUMP) to 2'-deoxythymidine-5'-monophosphate (dTMP) while utilizing 5,10-methylenetetrahydrofolate (mTHF) as the methyl donor, and NADPH and FADH(2) as the reductant. In Mycobacterium bovis (strain ATCC BAA-935 / AF2122/97), this protein is Flavin-dependent thymidylate synthase.